Reading from the N-terminus, the 261-residue chain is MLKTRIIPCLDVAEGRTVKGVNFVDLIDAGDPVEQARAYDLAGADELCFLDIKATHENRGTMYDLATRTAEQCFMPLTIGGGVRTVDDVRNLLLAGADKVSFNSAAVADPDCVARAADKFGSQCIVVAIDAKTVRPPAPLRGDPGRWEIFTHGGRKPTGIDAVEFAKTVVAKGAGEILLTSMDRDGTKAGFNLPLTRAVSDAVPVPVIASGGVGTLDHLVEGVTQGGASAVLAASIFHFGTYTIGEAKAHMAKAGIPVRLT.

Active-site residues include D11 and D130.

Belongs to the HisA/HisF family. Heterodimer of HisH and HisF.

It is found in the cytoplasm. It carries out the reaction 5-[(5-phospho-1-deoxy-D-ribulos-1-ylimino)methylamino]-1-(5-phospho-beta-D-ribosyl)imidazole-4-carboxamide + L-glutamine = D-erythro-1-(imidazol-4-yl)glycerol 3-phosphate + 5-amino-1-(5-phospho-beta-D-ribosyl)imidazole-4-carboxamide + L-glutamate + H(+). It functions in the pathway amino-acid biosynthesis; L-histidine biosynthesis; L-histidine from 5-phospho-alpha-D-ribose 1-diphosphate: step 5/9. Its function is as follows. IGPS catalyzes the conversion of PRFAR and glutamine to IGP, AICAR and glutamate. The HisF subunit catalyzes the cyclization activity that produces IGP and AICAR from PRFAR using the ammonia provided by the HisH subunit. In Jannaschia sp. (strain CCS1), this protein is Imidazole glycerol phosphate synthase subunit HisF.